The following is a 374-amino-acid chain: Probable neutral protease 2 homolog TRV_05367 (374 aa).

The first 19 residues, Met-1–Gly-19, serve as a signal peptide directing secretion. A propeptide spanning residues Phe-20–Arg-189 is cleaved from the precursor. Disulfide bonds link Cys-197–Cys-267 and Cys-274–Cys-292. Position 317 (His-317) interacts with Zn(2+). Glu-318 is a catalytic residue. The Zn(2+) site is built by His-321 and Asp-332.

Belongs to the peptidase M35 family. Zn(2+) serves as cofactor.

The protein localises to the secreted. The catalysed reaction is Preferential cleavage of bonds with hydrophobic residues in P1'. Also 3-Asn-|-Gln-4 and 8-Gly-|-Ser-9 bonds in insulin B chain.. Probable secreted metalloprotease that shows high activities on basic nuclear substrates such as histone and protamine. May be involved in virulence. This chain is Probable neutral protease 2 homolog TRV_05367, found in Trichophyton verrucosum (strain HKI 0517).